A 294-amino-acid chain; its full sequence is Indole-3-glycerol phosphate synthase (294 aa).

It belongs to the TrpC family.

The enzyme catalyses 1-(2-carboxyphenylamino)-1-deoxy-D-ribulose 5-phosphate + H(+) = (1S,2R)-1-C-(indol-3-yl)glycerol 3-phosphate + CO2 + H2O. Its pathway is amino-acid biosynthesis; L-tryptophan biosynthesis; L-tryptophan from chorismate: step 4/5. The sequence is that of Indole-3-glycerol phosphate synthase from Synechococcus sp. (strain WH7803).